Consider the following 404-residue polypeptide: Interferon-activable protein 205-A (404 aa).

In terms of domain architecture, Pyrin spans 1-88; that stretch reads MENEYKRLVL…AEILKKERSE (88 aa). Residues 85-198 are disordered; the sequence is ERSEVTEETS…KSQPQNQNIP (114 aa). 2 stretches are compositionally biased toward low complexity: residues 102 to 112 and 122 to 132; these read ASPATPTSTTS and TSTTQEETSTA. Over residues 137 to 147 the composition is skewed to basic and acidic residues; sequence GMSEEKTDVKK. A compositionally biased stretch (low complexity) spans 168 to 185; it reads QSPISQVSSSASSNIPSA. The span at 186–197 shows a compositional bias: polar residues; the sequence is KNQKSQPQNQNI. Residues 192 to 392 enclose the HIN-200 domain; it reads PQNQNIPRGA…CGDHSFVKVT (201 aa).

It belongs to the HIN-200 family.

Its subcellular location is the nucleus. In terms of biological role, may act as a transcriptional regulator in the myeloid lineage. Inhibits cell growth via p53/TP53 and RB1-dependent and independent pathways. The sequence is that of Interferon-activable protein 205-A (Ifi205a) from Mus musculus (Mouse).